The sequence spans 393 residues: NAD(P)H-quinone oxidoreductase subunit H, chloroplastic (393 aa).

It belongs to the complex I 49 kDa subunit family. NDH is composed of at least 16 different subunits, 5 of which are encoded in the nucleus.

The protein resides in the plastid. The protein localises to the chloroplast thylakoid membrane. It carries out the reaction a plastoquinone + NADH + (n+1) H(+)(in) = a plastoquinol + NAD(+) + n H(+)(out). The catalysed reaction is a plastoquinone + NADPH + (n+1) H(+)(in) = a plastoquinol + NADP(+) + n H(+)(out). NDH shuttles electrons from NAD(P)H:plastoquinone, via FMN and iron-sulfur (Fe-S) centers, to quinones in the photosynthetic chain and possibly in a chloroplast respiratory chain. The immediate electron acceptor for the enzyme in this species is believed to be plastoquinone. Couples the redox reaction to proton translocation, and thus conserves the redox energy in a proton gradient. This Ipomoea purpurea (Common morning glory) protein is NAD(P)H-quinone oxidoreductase subunit H, chloroplastic.